The primary structure comprises 357 residues: MSKQILILPGDGIGPEIMAEAVKVLKRIDAQHGLGFELVYDELGGAAYDKYGSPLADETLERARAADAVLLGAVGGPQWDTIDPSLRPERGLLKIRSQLGLFANLRPALLYPQLADASTLKPEVVAGLDLLILRELTGGIYFGQPRGNRTLDNGERQAYDTLPYSESEIRRIAKAGFEMARLRGKKLCSVDKANVLASSQLWRAVVEEVAKDYPDIALSHMYVDNAAMQLVRAPKQFDVIVTDNMFGDILSDQASMLTGSIGMLPSASLDANSKGMYEPCHGSAPDIAGKGIANPLATILSVAMMLRYTFAQADAADAIERAVGKVLDQGLRTADIWSEGTTKVGTVAMGDAVVAAL.

76 to 89 (GPQWDTIDPSLRPE) lines the NAD(+) pocket. 4 residues coordinate substrate: R96, R106, R134, and D224. Mg(2+) is bound by residues D224, D248, and D252. Position 282–294 (282–294 (GSAPDIAGKGIAN)) interacts with NAD(+).

This sequence belongs to the isocitrate and isopropylmalate dehydrogenases family. LeuB type 1 subfamily. In terms of assembly, homodimer. The cofactor is Mg(2+). Mn(2+) serves as cofactor.

The protein resides in the cytoplasm. The catalysed reaction is (2R,3S)-3-isopropylmalate + NAD(+) = 4-methyl-2-oxopentanoate + CO2 + NADH. The protein operates within amino-acid biosynthesis; L-leucine biosynthesis; L-leucine from 3-methyl-2-oxobutanoate: step 3/4. In terms of biological role, catalyzes the oxidation of 3-carboxy-2-hydroxy-4-methylpentanoate (3-isopropylmalate) to 3-carboxy-4-methyl-2-oxopentanoate. The product decarboxylates to 4-methyl-2 oxopentanoate. This chain is 3-isopropylmalate dehydrogenase, found in Xanthomonas euvesicatoria pv. vesicatoria (strain 85-10) (Xanthomonas campestris pv. vesicatoria).